The sequence spans 190 residues: Elongation factor P (190 aa).

It belongs to the elongation factor P family.

It is found in the cytoplasm. It functions in the pathway protein biosynthesis; polypeptide chain elongation. Involved in peptide bond synthesis. Stimulates efficient translation and peptide-bond synthesis on native or reconstituted 70S ribosomes in vitro. Probably functions indirectly by altering the affinity of the ribosome for aminoacyl-tRNA, thus increasing their reactivity as acceptors for peptidyl transferase. The polypeptide is Elongation factor P (efp) (Mycoplasma pneumoniae (strain ATCC 29342 / M129 / Subtype 1) (Mycoplasmoides pneumoniae)).